The following is a 96-amino-acid chain: Probable quinol oxidase subunit 4 (96 aa).

3 helical membrane passes run 8-28, 36-56, and 68-88; these read TVGFIASIVLTILAVFVTLYT, ITIIFGFAFIQAAVQLLMFMH, and FKVLFAIIITLITVIGTYWVM.

It belongs to the cytochrome c oxidase bacterial subunit 4 family.

The protein localises to the cell membrane. The enzyme catalyses 2 a quinol + O2 = 2 a quinone + 2 H2O. Its function is as follows. Catalyzes quinol oxidation with the concomitant reduction of oxygen to water. This is Probable quinol oxidase subunit 4 (qoxD) from Staphylococcus saprophyticus subsp. saprophyticus (strain ATCC 15305 / DSM 20229 / NCIMB 8711 / NCTC 7292 / S-41).